Consider the following 278-residue polypeptide: Imidazole glycerol phosphate synthase subunit HisF (278 aa).

Catalysis depends on residues Asp11 and Asp130.

Belongs to the HisA/HisF family. In terms of assembly, heterodimer of HisH and HisF.

The protein resides in the cytoplasm. It carries out the reaction 5-[(5-phospho-1-deoxy-D-ribulos-1-ylimino)methylamino]-1-(5-phospho-beta-D-ribosyl)imidazole-4-carboxamide + L-glutamine = D-erythro-1-(imidazol-4-yl)glycerol 3-phosphate + 5-amino-1-(5-phospho-beta-D-ribosyl)imidazole-4-carboxamide + L-glutamate + H(+). Its pathway is amino-acid biosynthesis; L-histidine biosynthesis; L-histidine from 5-phospho-alpha-D-ribose 1-diphosphate: step 5/9. In terms of biological role, IGPS catalyzes the conversion of PRFAR and glutamine to IGP, AICAR and glutamate. The HisF subunit catalyzes the cyclization activity that produces IGP and AICAR from PRFAR using the ammonia provided by the HisH subunit. The protein is Imidazole glycerol phosphate synthase subunit HisF of Thermodesulfovibrio yellowstonii (strain ATCC 51303 / DSM 11347 / YP87).